The chain runs to 103 residues: Large ribosomal subunit protein bL21 (103 aa).

The protein belongs to the bacterial ribosomal protein bL21 family. Part of the 50S ribosomal subunit. Contacts protein L20.

Functionally, this protein binds to 23S rRNA in the presence of protein L20. This Wigglesworthia glossinidia brevipalpis protein is Large ribosomal subunit protein bL21.